The chain runs to 950 residues: Bifunctional glutamine synthetase adenylyltransferase/adenylyl-removing enzyme (950 aa).

The adenylyl removase stretch occupies residues 1 to 440; it reads MLPLPSELQI…VFDHLIGDDA (440 aa). Residues 449-950 are adenylyl transferase; that stretch reads HGLYKSLWQD…KWLVAAPSDV (502 aa).

It belongs to the GlnE family. It depends on Mg(2+) as a cofactor.

The enzyme catalyses [glutamine synthetase]-O(4)-(5'-adenylyl)-L-tyrosine + phosphate = [glutamine synthetase]-L-tyrosine + ADP. It carries out the reaction [glutamine synthetase]-L-tyrosine + ATP = [glutamine synthetase]-O(4)-(5'-adenylyl)-L-tyrosine + diphosphate. Its function is as follows. Involved in the regulation of glutamine synthetase GlnA, a key enzyme in the process to assimilate ammonia. When cellular nitrogen levels are high, the C-terminal adenylyl transferase (AT) inactivates GlnA by covalent transfer of an adenylyl group from ATP to specific tyrosine residue of GlnA, thus reducing its activity. Conversely, when nitrogen levels are low, the N-terminal adenylyl removase (AR) activates GlnA by removing the adenylyl group by phosphorolysis, increasing its activity. The regulatory region of GlnE binds the signal transduction protein PII (GlnB) which indicates the nitrogen status of the cell. This is Bifunctional glutamine synthetase adenylyltransferase/adenylyl-removing enzyme from Yersinia enterocolitica serotype O:8 / biotype 1B (strain NCTC 13174 / 8081).